A 412-amino-acid polypeptide reads, in one-letter code: Serine hydroxymethyltransferase (412 aa).

Residues Leu-121 and 125–127 (GHL) contribute to the (6S)-5,6,7,8-tetrahydrofolate site. Lys-230 bears the N6-(pyridoxal phosphate)lysine mark. 353 to 355 (TPF) contributes to the (6S)-5,6,7,8-tetrahydrofolate binding site.

This sequence belongs to the SHMT family. As to quaternary structure, homodimer. The cofactor is pyridoxal 5'-phosphate.

Its subcellular location is the cytoplasm. The enzyme catalyses (6R)-5,10-methylene-5,6,7,8-tetrahydrofolate + glycine + H2O = (6S)-5,6,7,8-tetrahydrofolate + L-serine. Its pathway is one-carbon metabolism; tetrahydrofolate interconversion. It participates in amino-acid biosynthesis; glycine biosynthesis; glycine from L-serine: step 1/1. Catalyzes the reversible interconversion of serine and glycine with tetrahydrofolate (THF) serving as the one-carbon carrier. This reaction serves as the major source of one-carbon groups required for the biosynthesis of purines, thymidylate, methionine, and other important biomolecules. Also exhibits THF-independent aldolase activity toward beta-hydroxyamino acids, producing glycine and aldehydes, via a retro-aldol mechanism. The polypeptide is Serine hydroxymethyltransferase (Finegoldia magna (strain ATCC 29328 / DSM 20472 / WAL 2508) (Peptostreptococcus magnus)).